A 396-amino-acid polypeptide reads, in one-letter code: MSWSFLTRLLEEIHNHSTFVGKIWLTVLIVFRIVLTAVGGESIYYDEQSKFVCNTEQPGCENVCYDAFAPLSHVRFWVFQIILVATPSVMYLGYAIHKIAKMEHGDADKKAARSKPYAMRWKQHRALEETEEDHEEDPMMYPEMELESEKENKDQNQSKPKHDGRRRIREDGLMKIYVLQLLARTVFEVGFLVGQYFLYGFQVHPFYVCSRLPCPHKIDCFISRPTEKTIFLLIMYGVTGLCLLLNIWEMLHLGFGTIRDSLNSKRRELEDPGAYNYPFTWNTPSAPPGYNIAVKPDQIQYTELSNAKIAYKQNKANIAQEQQYGSHEDNLPPDLETLQREIRMAQERLDLAIQAYNHQNNPHGSREKKAKVGSKAGSNKSSASSKSGDGKTSVWI.

The Cytoplasmic portion of the chain corresponds to 1–22 (MSWSFLTRLLEEIHNHSTFVGK). The chain crosses the membrane as a helical span at residues 23–45 (IWLTVLIVFRIVLTAVGGESIYY). Topologically, residues 46 to 75 (DEQSKFVCNTEQPGCENVCYDAFAPLSHVR) are extracellular. A helical membrane pass occupies residues 76 to 95 (FWVFQIILVATPSVMYLGYA). The Cytoplasmic segment spans residues 96 to 175 (IHKIAKMEHG…RRIREDGLMK (80 aa)). The tract at residues 146–165 (LESEKENKDQNQSKPKHDGR) is disordered. Residues 147–156 (ESEKENKDQN) show a composition bias toward basic and acidic residues. The chain crosses the membrane as a helical span at residues 176 to 198 (IYVLQLLARTVFEVGFLVGQYFL). The Extracellular segment spans residues 199-228 (YGFQVHPFYVCSRLPCPHKIDCFISRPTEK). The helical transmembrane segment at 229 to 248 (TIFLLIMYGVTGLCLLLNIW) threads the bilayer. Over 249–396 (EMLHLGFGTI…SGDGKTSVWI (148 aa)) the chain is Cytoplasmic. Residues 356 to 396 (YNHQNNPHGSREKKAKVGSKAGSNKSSASSKSGDGKTSVWI) form a disordered region. The span at 373-396 (GSKAGSNKSSASSKSGDGKTSVWI) shows a compositional bias: low complexity.

It belongs to the connexin family. Gamma-type subfamily. In terms of assembly, a connexon is composed of a hexamer of connexins. Interacts with CNST.

Its subcellular location is the cell membrane. The protein localises to the cell junction. It localises to the gap junction. In terms of biological role, one gap junction consists of a cluster of closely packed pairs of transmembrane channels, the connexons, through which materials of low MW diffuse from one cell to a neighboring cell. The polypeptide is Gap junction gamma-1 protein (GJC1) (Bos taurus (Bovine)).